A 222-amino-acid chain; its full sequence is Ras-related protein Rab-21 (222 aa).

Alanine 2 is modified (N-acetylalanine). Glycine 26, glycine 29, lysine 30, threonine 31, serine 32, asparagine 43, aspartate 44, histidine 46, threonine 48, and threonine 49 together coordinate GTP. Residue threonine 31 coordinates Mg(2+). The short motif at 41–54 is the Switch 1 element; the sequence is KFNDKHITTLQASF. Threonine 49 and aspartate 72 together coordinate Mg(2+). A Switch 2 motif is present at residues 74–92; the sequence is AGQERFHALGPIYYRDSNG. Residues glycine 75, asparagine 130, lysine 131, aspartate 133, alanine 161, and lysine 162 each coordinate GTP. 2 S-geranylgeranyl cysteine lipidation sites follow: cysteine 218 and cysteine 219. At cysteine 219 the chain carries Cysteine methyl ester. Positions 220 to 222 are cleaved as a propeptide — removed in mature form; that stretch reads SSG.

Belongs to the small GTPase superfamily. Rab family. Interacts with the cytoplasmic tail of integrins ITGA1, ITGA2, ITGA5, ITGA6, ITGA11 and ITGB1; this interaction is dependent upon its GDP/GTP cycle. Interacts with RABGEF1 (via VPS9 domain). Interacts with ANKRD27. Interacts with VAMP7. Interacts (in GTP-bound form) with VAMP8 in response to starvation; the interaction probably regulates VAMP8 endolysosomal trafficking. Interacts (active GTP-bound form) with TMED10; the interaction is indirect and regulates TMED10 abundance and localization at the Golgi. Requires Mg(2+) as cofactor.

It localises to the endoplasmic reticulum membrane. The protein localises to the golgi apparatus. The protein resides in the trans-Golgi network. It is found in the golgi apparatus membrane. Its subcellular location is the early endosome membrane. It localises to the cytoplasmic vesicle membrane. The protein localises to the cleavage furrow. The protein resides in the cell projection. It is found in the neuron projection. The catalysed reaction is GTP + H2O = GDP + phosphate + H(+). With respect to regulation, regulated by guanine nucleotide exchange factors (GEFs) including ANKRD27 and RABGEF1, which promote the exchange of bound GDP for free GTP. Regulated by GTPase activating proteins (GAPs) which increase the GTP hydrolysis activity. Inhibited by GDP dissociation inhibitors (GDIs). The small GTPases Rab are key regulators of intracellular membrane trafficking, from the formation of transport vesicles to their fusion with membranes. Rabs cycle between an inactive GDP-bound form and an active GTP-bound form that is able to recruit to membranes different sets of downstream effectors directly responsible for vesicle formation, movement, tethering and fusion. RAB21 is involved in membrane trafficking control. Regulates integrin internalization and recycling, but does not influence the traffic of endosomally translocated receptors in general. As a result, may regulate cell adhesion and migration. During the mitosis of adherent cells, controls the endosomal trafficking of integrins which is required for the successful completion of cytokinesis. Involved in neurite growth. Following SBF2/MTMT13-mediated activation in response to starvation-induced autophagy, binds to and regulates SNARE protein VAMP8 endolysosomal transport required for SNARE-mediated autophagosome-lysosome fusion. Modulates protein levels of the cargo receptors TMED2 and TMED10, and required for appropriate Golgi localization of TMED10. In Mus musculus (Mouse), this protein is Ras-related protein Rab-21.